Reading from the N-terminus, the 571-residue chain is Streptolysin O (571 aa).

Positions 1–33 (MSNKKTFKKYSRVAGLLTVALIIGNLVTANAES) are cleaved as a signal peptide. Disordered stretches follow at residues 32-56 (ESNKQNTASTETTTTNEQPKPESSE) and 81-108 (KEMPLESAEKEEKKSEDKKKSEEDHTEE). The span at 37–48 (NTASTETTTTNE) shows a compositional bias: low complexity. 4 consecutive transmembrane segments (beta stranded) span residues 260–273 (KSQIEAALNVNSKI), 280–289 (IDFKSISKGE), 358–367 (SNDVEAAFSA), and 375–387 (KTNGKYSDILENS). Residues 529–539 (ECTGLAWEWWR) carry the Conserved undecapeptide motif. Threonine 561 is a short sequence motif (cholesterol binding).

This sequence belongs to the cholesterol-dependent cytolysin family. In terms of assembly, homooligomeric pore complex of 35 to 50 subunits; when inserted in the host membrane.

It localises to the secreted. The protein localises to the host cell membrane. Its function is as follows. A cholesterol-dependent toxin that causes cytolysis by forming pores in cholesterol containing host membranes. After binding to target membranes, the protein undergoes a major conformation change, leading to its insertion in the host membrane and formation of an oligomeric pore complex. Cholesterol is required for binding to host membranes, membrane insertion and pore formation; cholesterol binding is mediated by a Thr-Leu pair in the C-terminus. Can be reversibly inactivated by oxidation. The polypeptide is Streptolysin O (slo) (Streptococcus pyogenes serotype M6 (strain ATCC BAA-946 / MGAS10394)).